A 284-amino-acid chain; its full sequence is Bifunctional protein FolD (284 aa).

NADP(+)-binding positions include 165 to 167 (GRS) and S190.

The protein belongs to the tetrahydrofolate dehydrogenase/cyclohydrolase family. Homodimer.

The catalysed reaction is (6R)-5,10-methylene-5,6,7,8-tetrahydrofolate + NADP(+) = (6R)-5,10-methenyltetrahydrofolate + NADPH. It catalyses the reaction (6R)-5,10-methenyltetrahydrofolate + H2O = (6R)-10-formyltetrahydrofolate + H(+). It participates in one-carbon metabolism; tetrahydrofolate interconversion. In terms of biological role, catalyzes the oxidation of 5,10-methylenetetrahydrofolate to 5,10-methenyltetrahydrofolate and then the hydrolysis of 5,10-methenyltetrahydrofolate to 10-formyltetrahydrofolate. The sequence is that of Bifunctional protein FolD from Streptococcus mutans serotype c (strain ATCC 700610 / UA159).